A 315-amino-acid polypeptide reads, in one-letter code: Methionyl-tRNA formyltransferase (315 aa).

Residues 2 to 189 form an N-terminal domain region; that stretch reads SESLRIIFAG…LITTLKQLAD (188 aa). 113 to 116 contributes to the (6S)-5,6,7,8-tetrahydrofolate binding site; that stretch reads SLLP. Positions 210–315 are C-terminal domain; that stretch reads KEEARIDWSL…EWFVPGNRLV (106 aa).

The protein belongs to the Fmt family.

It carries out the reaction L-methionyl-tRNA(fMet) + (6R)-10-formyltetrahydrofolate = N-formyl-L-methionyl-tRNA(fMet) + (6S)-5,6,7,8-tetrahydrofolate + H(+). Functionally, attaches a formyl group to the free amino group of methionyl-tRNA(fMet). The formyl group appears to play a dual role in the initiator identity of N-formylmethionyl-tRNA by promoting its recognition by IF2 and preventing the misappropriation of this tRNA by the elongation apparatus. This is Methionyl-tRNA formyltransferase from Escherichia coli O157:H7.